The sequence spans 196 residues: Ribonuclease HII (196 aa).

Residues 9–196 (RLVAGVDEVG…KPVRRALGIE (188 aa)) form the RNase H type-2 domain. A divalent metal cation-binding residues include aspartate 15, glutamate 16, and aspartate 107.

This sequence belongs to the RNase HII family. Requires Mn(2+) as cofactor. Mg(2+) is required as a cofactor.

The protein resides in the cytoplasm. The enzyme catalyses Endonucleolytic cleavage to 5'-phosphomonoester.. Endonuclease that specifically degrades the RNA of RNA-DNA hybrids. The polypeptide is Ribonuclease HII (Aeromonas hydrophila subsp. hydrophila (strain ATCC 7966 / DSM 30187 / BCRC 13018 / CCUG 14551 / JCM 1027 / KCTC 2358 / NCIMB 9240 / NCTC 8049)).